The following is a 134-amino-acid chain: Large ribosomal subunit protein uL16c (134 aa).

The interval Met1 to Ala21 is disordered.

Belongs to the universal ribosomal protein uL16 family. As to quaternary structure, part of the 50S ribosomal subunit.

It is found in the plastid. Its subcellular location is the chloroplast. The chain is Large ribosomal subunit protein uL16c from Chlorella vulgaris (Green alga).